The sequence spans 582 residues: Membrane protein insertase YidC (582 aa).

A helical transmembrane segment spans residues 3–23 (IQRALVITGIAVVSYLMIQAW). Positions 38-92 (QVAEQGNSSSSDSADLPSVQSQTDNSIPSAQSDNDLPSVSPADIAQPTPSSQRIE) are disordered. The span at 45-58 (SSSSDSADLPSVQS) shows a compositional bias: low complexity. The span at 59–74 (QTDNSIPSAQSDNDLP) shows a compositional bias: polar residues. The next 5 helical transmembrane spans lie at 357-377 (TVDYGWLWFISQPIFALLVFL), 394-414 (GVGNWGVAIILLTLIIKAIFF), 464-484 (LGGCLPMLVQMPVFIALYYVL), 495-515 (FFLWINDLSVMDPYFVLPILM), and 541-561 (MPMIFAVFMLWFPAGLVLYWL).

Belongs to the OXA1/ALB3/YidC family. Type 1 subfamily. Interacts with the Sec translocase complex via SecD. Specifically interacts with transmembrane segments of nascent integral membrane proteins during membrane integration.

Its subcellular location is the cell inner membrane. In terms of biological role, required for the insertion and/or proper folding and/or complex formation of integral membrane proteins into the membrane. Involved in integration of membrane proteins that insert both dependently and independently of the Sec translocase complex, as well as at least some lipoproteins. Aids folding of multispanning membrane proteins. This chain is Membrane protein insertase YidC, found in Alcanivorax borkumensis (strain ATCC 700651 / DSM 11573 / NCIMB 13689 / SK2).